Reading from the N-terminus, the 396-residue chain is Elongation factor Tu (396 aa).

A tr-type G domain is found at 10 to 206 (KPHCNIGTIG…NVDEYIPQPE (197 aa)). The segment at 19–26 (GHVDHGKT) is G1. 19-26 (GHVDHGKT) lines the GTP pocket. Thr-26 is a Mg(2+) binding site. Residues 60–64 (GITIS) form a G2 region. Residues 81–84 (DCPG) form a G3 region. GTP-binding positions include 81 to 85 (DCPGH) and 136 to 139 (NKCD). The tract at residues 136–139 (NKCD) is G4. A G5 region spans residues 174–176 (SAL).

It belongs to the TRAFAC class translation factor GTPase superfamily. Classic translation factor GTPase family. EF-Tu/EF-1A subfamily. In terms of assembly, monomer.

It is found in the cytoplasm. It carries out the reaction GTP + H2O = GDP + phosphate + H(+). Its function is as follows. GTP hydrolase that promotes the GTP-dependent binding of aminoacyl-tRNA to the A-site of ribosomes during protein biosynthesis. This Afipia carboxidovorans (strain ATCC 49405 / DSM 1227 / KCTC 32145 / OM5) (Oligotropha carboxidovorans) protein is Elongation factor Tu.